A 127-amino-acid polypeptide reads, in one-letter code: Large ribosomal subunit protein bL17 (127 aa).

This sequence belongs to the bacterial ribosomal protein bL17 family. In terms of assembly, part of the 50S ribosomal subunit. Contacts protein L32.

In Chromohalobacter salexigens (strain ATCC BAA-138 / DSM 3043 / CIP 106854 / NCIMB 13768 / 1H11), this protein is Large ribosomal subunit protein bL17.